Consider the following 197-residue polypeptide: Phosphoheptose isomerase (197 aa).

Positions M34–Q196 constitute an SIS domain. Residue N49–G51 participates in substrate binding. Positions 58 and 62 each coordinate Zn(2+). Residues E62, N91–D92, S117–S119, S122, and Q172 each bind substrate. 2 residues coordinate Zn(2+): Q172 and H180.

Belongs to the SIS family. GmhA subfamily. As to quaternary structure, homotetramer. Zn(2+) serves as cofactor.

The protein localises to the cytoplasm. It carries out the reaction 2 D-sedoheptulose 7-phosphate = D-glycero-alpha-D-manno-heptose 7-phosphate + D-glycero-beta-D-manno-heptose 7-phosphate. It participates in carbohydrate biosynthesis; D-glycero-D-manno-heptose 7-phosphate biosynthesis; D-glycero-alpha-D-manno-heptose 7-phosphate and D-glycero-beta-D-manno-heptose 7-phosphate from sedoheptulose 7-phosphate: step 1/1. Catalyzes the isomerization of sedoheptulose 7-phosphate in D-glycero-D-manno-heptose 7-phosphate. The protein is Phosphoheptose isomerase of Shewanella piezotolerans (strain WP3 / JCM 13877).